The chain runs to 425 residues: Glutamyl-tRNA reductase (425 aa).

Substrate is bound by residues 49-52 (TCNR), serine 109, 114-116 (EGQ), and glutamine 120. The active-site Nucleophile is the cysteine 50. 189 to 194 (GAGETG) contacts NADP(+).

It belongs to the glutamyl-tRNA reductase family. As to quaternary structure, homodimer.

The enzyme catalyses (S)-4-amino-5-oxopentanoate + tRNA(Glu) + NADP(+) = L-glutamyl-tRNA(Glu) + NADPH + H(+). It participates in porphyrin-containing compound metabolism; protoporphyrin-IX biosynthesis; 5-aminolevulinate from L-glutamyl-tRNA(Glu): step 1/2. The protein operates within porphyrin-containing compound metabolism; chlorophyll biosynthesis. Catalyzes the NADPH-dependent reduction of glutamyl-tRNA(Glu) to glutamate 1-semialdehyde (GSA). The polypeptide is Glutamyl-tRNA reductase (Chlorobium phaeovibrioides (strain DSM 265 / 1930) (Prosthecochloris vibrioformis (strain DSM 265))).